Consider the following 296-residue polypeptide: GTPase Era (296 aa).

The Era-type G domain maps to 3–170 (KSGFVTIIGR…IELMVKHLNE (168 aa)). The tract at residues 11–18 (GRPNVGKS) is G1. Residue 11–18 (GRPNVGKS) coordinates GTP. A G2 region spans residues 37 to 41 (QTTRN). The tract at residues 58–61 (DTPG) is G3. GTP-binding positions include 58-62 (DTPGM) and 120-123 (NKID). Residues 120-123 (NKID) are G4. Positions 149 to 151 (ISA) are G5. Positions 201–277 (LSQEVPHGIA…NMKIWVKVKK (77 aa)) constitute a KH type-2 domain.

The protein belongs to the TRAFAC class TrmE-Era-EngA-EngB-Septin-like GTPase superfamily. Era GTPase family. In terms of assembly, monomer.

It is found in the cytoplasm. It localises to the cell membrane. Functionally, an essential GTPase that binds both GDP and GTP, with rapid nucleotide exchange. Plays a role in 16S rRNA processing and 30S ribosomal subunit biogenesis and possibly also in cell cycle regulation and energy metabolism. This chain is GTPase Era, found in Clostridium acetobutylicum (strain ATCC 824 / DSM 792 / JCM 1419 / IAM 19013 / LMG 5710 / NBRC 13948 / NRRL B-527 / VKM B-1787 / 2291 / W).